The following is a 224-amino-acid chain: MEHNRQQLRLMQLSSSSLPVGSFTWSQGLEWAVEAGWITTDAEFKRWQIQQMEQSFFCVDLPLFIRLYRACEQNDAVSARRWTAYLLACRETRELREEERNRGAAFTRLIKSWEPDCPQEWLPLFSQSQLCGMAWLGVRWEISAHELALSLGYSWIESAVMAGVKLVPFGQQAAQRLIIELSDHFAAGLEHAWRRGDDELGAATPLSAIASARHETQYSRLFRS.

This sequence belongs to the UreF family. As to quaternary structure, ureD, UreF and UreG form a complex that acts as a GTP-hydrolysis-dependent molecular chaperone, activating the urease apoprotein by helping to assemble the nickel containing metallocenter of UreC. The UreE protein probably delivers the nickel.

The protein localises to the cytoplasm. Functionally, required for maturation of urease via the functional incorporation of the urease nickel metallocenter. The sequence is that of Urease accessory protein UreF from Enterobacter sp. (strain 638).